Reading from the N-terminus, the 116-residue chain is NADH-ubiquinone oxidoreductase chain 3 (116 aa).

The next 3 membrane-spanning stretches (helical) occupy residues 3-23 (LITTIITITITLSAVLATISF), 56-76 (FFLIAILFLLFDLEIALLLPL), and 87-107 (LTLIWSTAVLALLTLGLIYEW).

The protein belongs to the complex I subunit 3 family.

The protein localises to the mitochondrion membrane. The enzyme catalyses a ubiquinone + NADH + 5 H(+)(in) = a ubiquinol + NAD(+) + 4 H(+)(out). Functionally, core subunit of the mitochondrial membrane respiratory chain NADH dehydrogenase (Complex I) that is believed to belong to the minimal assembly required for catalysis. Complex I functions in the transfer of electrons from NADH to the respiratory chain. The immediate electron acceptor for the enzyme is believed to be ubiquinone. The protein is NADH-ubiquinone oxidoreductase chain 3 (MT-ND3) of Oncorhynchus keta (Chum salmon).